Consider the following 38-residue polypeptide: Small ribosomal subunit protein uS12c (38 aa).

Residues 1-26 are disordered; it reads MPTIQQLIRNARQPIENRKKSPALRG.

The protein belongs to the universal ribosomal protein uS12 family. Part of the 30S ribosomal subunit.

It is found in the plastid. The protein localises to the chloroplast. Functionally, with S4 and S5 plays an important role in translational accuracy. Located at the interface of the 30S and 50S subunits. The protein is Small ribosomal subunit protein uS12c (rps12) of Pinus contorta (Shore pine).